The chain runs to 114 residues: T cell receptor beta variable 4-2 (114 aa).

An N-terminal signal peptide occupies residues M1–T21. In terms of domain architecture, Ig-like spans G22 to Q114. A disulfide bridge connects residues C42 and C110. 2 N-linked (GlcNAc...) asparagine glycosylation sites follow: N76 and N89.

Alpha-beta TR is a heterodimer composed of an alpha and beta chain; disulfide-linked. The alpha-beta TR is associated with the transmembrane signaling CD3 coreceptor proteins to form the TR-CD3 (TcR or TCR). The assembly of alpha-beta TR heterodimers with CD3 occurs in the endoplasmic reticulum where a single alpha-beta TR heterodimer associates with one CD3D-CD3E heterodimer, one CD3G-CD3E heterodimer and one CD247 homodimer forming a stable octameric structure. CD3D-CD3E and CD3G-CD3E heterodimers preferentially associate with TR alpha and TR beta chains, respectively. The association of the CD247 homodimer is the last step of TcR assembly in the endoplasmic reticulum and is required for transport to the cell surface.

The protein resides in the cell membrane. In terms of biological role, v region of the variable domain of T cell receptor (TR) beta chain that participates in the antigen recognition. Alpha-beta T cell receptors are antigen specific receptors which are essential to the immune response and are present on the cell surface of T lymphocytes. Recognize peptide-major histocompatibility (MH) (pMH) complexes that are displayed by antigen presenting cells (APC), a prerequisite for efficient T cell adaptive immunity against pathogens. Binding of alpha-beta TR to pMH complex initiates TR-CD3 clustering on the cell surface and intracellular activation of LCK that phosphorylates the ITAM motifs of CD3G, CD3D, CD3E and CD247 enabling the recruitment of ZAP70. In turn ZAP70 phosphorylates LAT, which recruits numerous signaling molecules to form the LAT signalosome. The LAT signalosome propagates signal branching to three major signaling pathways, the calcium, the mitogen-activated protein kinase (MAPK) kinase and the nuclear factor NF-kappa-B (NF-kB) pathways, leading to the mobilization of transcription factors that are critical for gene expression and essential for T cell growth and differentiation. The T cell repertoire is generated in the thymus, by V-(D)-J rearrangement. This repertoire is then shaped by intrathymic selection events to generate a peripheral T cell pool of self-MH restricted, non-autoaggressive T cells. Post-thymic interaction of alpha-beta TR with the pMH complexes shapes TR structural and functional avidity. The chain is T cell receptor beta variable 4-2 from Homo sapiens (Human).